Here is a 706-residue protein sequence, read N- to C-terminus: ATP-dependent DNA helicase HMI1, mitochondrial (706 aa).

In terms of domain architecture, UvrD-like helicase ATP-binding spans 5 to 277 (TPSQWKVINK…LKLFDNFRST (273 aa)). Residues 29–34 (GSGKTL) and Arg-275 each bind ATP. A UvrD-like helicase C-terminal domain is found at 278–593 (PEIISLASKI…KLSTIHSAKG (316 aa)). Residues 693–706 (YSSLRGCKSVFRRI) constitute a propeptide, cleaved upon import into mitochondrion.

The protein belongs to the helicase family. UvrD subfamily. It depends on Mg(2+) as a cofactor.

It localises to the mitochondrion inner membrane. The enzyme catalyses Couples ATP hydrolysis with the unwinding of duplex DNA by translocating in the 3'-5' direction.. It catalyses the reaction ATP + H2O = ADP + phosphate + H(+). Required for mitochondrial genome maintenance and mitochondrial DNA inheritance. The sequence is that of ATP-dependent DNA helicase HMI1, mitochondrial (HMI1) from Saccharomyces cerevisiae (strain ATCC 204508 / S288c) (Baker's yeast).